The chain runs to 472 residues: Chromosomal replication initiator protein DnaA (472 aa).

The domain I, interacts with DnaA modulators stretch occupies residues 1 to 73 (MSNMEQDRWS…LSCWQAELPE (73 aa)). A domain II region spans residues 73-128 (EVNRVDLTVRSPVRCAAPAKEAPAPVESRRDEQRPSAERSNGATPVSANHDALGGS). The segment at 89-124 (APAKEAPAPVESRRDEQRPSAERSNGATPVSANHDA) is disordered. The segment covering 99–109 (ESRRDEQRPSA) has biased composition (basic and acidic residues). Residues 110 to 119 (ERSNGATPVS) are compositionally biased toward polar residues. The domain III, AAA+ region stretch occupies residues 129–351 (PLDPRLTFAS…GAINRLLAHS (223 aa)). ATP contacts are provided by Gly176, Gly178, Lys179, and Thr180. The interval 352–472 (KLNNQPVTLE…VESLKRQLQE (121 aa)) is domain IV, binds dsDNA.

It belongs to the DnaA family. In terms of assembly, oligomerizes as a right-handed, spiral filament on DNA at oriC.

The protein localises to the cytoplasm. Plays an essential role in the initiation and regulation of chromosomal replication. ATP-DnaA binds to the origin of replication (oriC) to initiate formation of the DNA replication initiation complex once per cell cycle. Binds the DnaA box (a 9 base pair repeat at the origin) and separates the double-stranded (ds)DNA. Forms a right-handed helical filament on oriC DNA; dsDNA binds to the exterior of the filament while single-stranded (ss)DNA is stabiized in the filament's interior. The ATP-DnaA-oriC complex binds and stabilizes one strand of the AT-rich DNA unwinding element (DUE), permitting loading of DNA polymerase. After initiation quickly degrades to an ADP-DnaA complex that is not apt for DNA replication. Binds acidic phospholipids. The chain is Chromosomal replication initiator protein DnaA from Rhodopseudomonas palustris (strain TIE-1).